Here is a 425-residue protein sequence, read N- to C-terminus: Light-independent protochlorophyllide reductase subunit N (425 aa).

[4Fe-4S] cluster is bound by residues C17, C42, and C103.

The protein belongs to the BchN/ChlN family. In terms of assembly, protochlorophyllide reductase is composed of three subunits; ChlL, ChlN and ChlB. Forms a heterotetramer of two ChlB and two ChlN subunits. [4Fe-4S] cluster is required as a cofactor.

It catalyses the reaction chlorophyllide a + oxidized 2[4Fe-4S]-[ferredoxin] + 2 ADP + 2 phosphate = protochlorophyllide a + reduced 2[4Fe-4S]-[ferredoxin] + 2 ATP + 2 H2O. Its pathway is porphyrin-containing compound metabolism; chlorophyll biosynthesis (light-independent). In terms of biological role, component of the dark-operative protochlorophyllide reductase (DPOR) that uses Mg-ATP and reduced ferredoxin to reduce ring D of protochlorophyllide (Pchlide) to form chlorophyllide a (Chlide). This reaction is light-independent. The NB-protein (ChlN-ChlB) is the catalytic component of the complex. In Parasynechococcus marenigrum (strain WH8102), this protein is Light-independent protochlorophyllide reductase subunit N.